A 137-amino-acid polypeptide reads, in one-letter code: Small ribosomal subunit protein eS19 (137 aa).

The protein belongs to the eukaryotic ribosomal protein eS19 family. As to quaternary structure, component of the small ribosomal subunit.

Its subcellular location is the cytoplasm. The sequence is that of Small ribosomal subunit protein eS19 (RPS19) from Encephalitozoon cuniculi (strain GB-M1) (Microsporidian parasite).